The sequence spans 148 residues: UPF0260 protein Sfri_1740 (148 aa).

The protein belongs to the UPF0260 family.

This chain is UPF0260 protein Sfri_1740, found in Shewanella frigidimarina (strain NCIMB 400).